The primary structure comprises 122 residues: Crustacean hyperglycemic hormones 5 (122 aa).

The first 26 residues, 1 to 26, serve as a signal peptide directing secretion; it reads MSLGLIASRLVAVALVVVVACSTTWA. Cystine bridges form between Cys55–Cys91, Cys71–Cys87, and Cys74–Cys100. Val120 bears the Valine amide mark.

The protein belongs to the arthropod CHH/MIH/GIH/VIH hormone family.

The protein resides in the secreted. Hormone found in the sinus gland of isopods and decapods which controls the blood sugar level. Has a secretagogue action over the amylase released from the midgut gland. May act as a stress hormone and may be involved in the control of molting and reproduction. This chain is Crustacean hyperglycemic hormones 5 (CHH5), found in Penaeus monodon (Giant tiger prawn).